A 632-amino-acid chain; its full sequence is Phosphatidylinositol 3,4,5-trisphosphate 3-phosphatase and protein-tyrosine-phosphatase PTEN2B (632 aa).

Positions 1–12 are enriched in polar residues; the sequence is METDPANSSSKS. Residues 1 to 98 are disordered; sequence METDPANSSS…RESPPSIFSS (98 aa). Residues 39–48 show a composition bias toward basic and acidic residues; it reads SAEREAHEDS. Residues 63–73 are compositionally biased toward polar residues; it reads MPASSTGSEPL. Residues 87 to 98 show a composition bias toward low complexity; sequence SPRESPPSIFSS. Residues 189–368 enclose the Phosphatase tensin-type domain; the sequence is RRYQEGEFDL…KYYERVQNQF (180 aa). The active-site Phosphocysteine intermediate is the C307. One can recognise a C2 tensin-type domain in the interval 375-502; sequence ERRCMLRGFR…FHVEIVMIEP (128 aa). Residues 504-603 form a disordered region; the sequence is NSQPTKSKSD…SGHYNPIPNN (100 aa). Residues 505-527 are compositionally biased toward low complexity; that stretch reads SQPTKSKSDSTQQQSQSSSSADS. The segment covering 535 to 549 has biased composition (acidic residues); that stretch reads KDDDVFSDSDGEEEG. S541 bears the Phosphoserine mark. Residues 550-571 are compositionally biased toward polar residues; the sequence is NSQSYSTNEKTASSMHTTSKPH. Residues 584-594 are compositionally biased toward low complexity; sequence ANRSVTSSSSS.

This sequence belongs to the PTEN phosphatase protein family. As to expression, expressed, at low levels, in seedlings, roots, stems, leaves, flowers and siliques. However, at protein level, not observed in older leaves, flowers and siliques.

The enzyme catalyses O-phospho-L-tyrosyl-[protein] + H2O = L-tyrosyl-[protein] + phosphate. It carries out the reaction a 1,2-diacyl-sn-glycero-3-phospho-(1D-myo-inositol-3,4,5-trisphosphate) + H2O = a 1,2-diacyl-sn-glycero-3-phospho-(1D-myo-inositol-4,5-bisphosphate) + phosphate. Its function is as follows. Protein tyrosine phosphatase that also exhibits a weak lipid phosphatase activity towards PtdIns(3)P. This is Phosphatidylinositol 3,4,5-trisphosphate 3-phosphatase and protein-tyrosine-phosphatase PTEN2B from Arabidopsis thaliana (Mouse-ear cress).